A 472-amino-acid polypeptide reads, in one-letter code: Adenosylhomocysteinase (472 aa).

The substrate site is built by T63, D138, and E198. 199 to 201 serves as a coordination point for NAD(+); the sequence is TTT. K228 and D232 together coordinate substrate. NAD(+) is bound by residues N233, 262 to 267, E285, N320, 341 to 343, and N386; these read GYGDVG and IGH.

This sequence belongs to the adenosylhomocysteinase family. NAD(+) serves as cofactor.

It localises to the cytoplasm. It carries out the reaction S-adenosyl-L-homocysteine + H2O = L-homocysteine + adenosine. Its pathway is amino-acid biosynthesis; L-homocysteine biosynthesis; L-homocysteine from S-adenosyl-L-homocysteine: step 1/1. In terms of biological role, may play a key role in the regulation of the intracellular concentration of adenosylhomocysteine. The sequence is that of Adenosylhomocysteinase from Methylococcus capsulatus (strain ATCC 33009 / NCIMB 11132 / Bath).